The sequence spans 229 residues: DNA repair protein RecO (229 aa).

It belongs to the RecO family.

Its function is as follows. Involved in DNA repair and RecF pathway recombination. This Pseudomonas fluorescens (strain ATCC BAA-477 / NRRL B-23932 / Pf-5) protein is DNA repair protein RecO.